The sequence spans 507 residues: MGSCIGKEDPPPGATSPVHTSSTLGRESLPSHPRIPSIGPIAASSSGNTIDKNQNISQSANFVALFQYDARTDDDLSFKKDDILEILNDTQGDWWFARHKATGRTGYIPSNYVAREKSIESQPWYFGKMRRIDAEKCLLHTLNEHGAFLVRDSESRQHDLSLSVRENDSVKHYRIRQLDHGGYFIARRRPFATLHDLIAHYQREADGLCVNLGAPCAKSEAPQTTTFTYDDQWEVDRRSVRLIRQIGAGQFGEVWEGRWNVNVPVAVKKLKAGTADPTDFLAEAQIMKKLRHPKLLSLYAVCTRDEPILIVTELMQENLLTFLQRRGRQCQMPQLVEISAQVAAGMAYLEEMNFIHRDLAARNILINNSLSVKIADFGLARILMKENEYEARTGARFPIKWTAPEAANYNRFTTKSDVWSFGILLTEIVTFGRLPYPGMTNAEVLQQVDAGYRMPCPAGCPVTLYDIMQQCWRSDPDKRPTFETLQWKLEDLFNLDSSEYKEASINF.

Residues methionine 1–proline 10 are compositionally biased toward basic and acidic residues. A disordered region spans residues methionine 1–lysine 52. Glycine 2 carries N-myristoyl glycine lipidation. A compositionally biased stretch (low complexity) spans isoleucine 35–glycine 47. The region spanning serine 57–serine 118 is the SH3 domain. An SH2 domain is found at tryptophan 124–cysteine 216. The 255-residue stretch at valine 240 to asparagine 494 folds into the Protein kinase domain. ATP contacts are provided by residues isoleucine 246–valine 254 and lysine 268. The active-site Proton acceptor is the aspartate 358. Residue tyrosine 500 is modified to Phosphotyrosine.

Belongs to the protein kinase superfamily. Tyr protein kinase family. SRC subfamily. It depends on Mg(2+) as a cofactor. Requires Mn(2+) as cofactor. Post-translationally, may be phosphorylated on Tyr-500 by csk-1. In terms of tissue distribution, expressed in vulva, cells around anus and pharyngeal muscles.

The enzyme catalyses L-tyrosyl-[protein] + ATP = O-phospho-L-tyrosyl-[protein] + ADP + H(+). With respect to regulation, may be inhibited by csk-1-mediated phosphorylation at Tyr-500. Functionally, non-receptor tyrosine-protein kinase which may play a role in larval and pharynx development. Unlike src-1, does not play a role in embryonic development. The chain is Tyrosine protein-kinase src-2 from Caenorhabditis elegans.